Consider the following 392-residue polypeptide: Probable nucleoredoxin 3 (392 aa).

Thioredoxin domains are found at residues 17 to 171 (LYSI…DSKR) and 177 to 326 (EKLL…ELKA).

Belongs to the nucleoredoxin family.

The enzyme catalyses [protein]-dithiol + NAD(+) = [protein]-disulfide + NADH + H(+). It catalyses the reaction [protein]-dithiol + NADP(+) = [protein]-disulfide + NADPH + H(+). Functionally, probable thiol-disulfide oxidoreductase that may participate in various redox reactions. This Arabidopsis thaliana (Mouse-ear cress) protein is Probable nucleoredoxin 3.